We begin with the raw amino-acid sequence, 99 residues long: Evasin P1162 (99 aa).

A signal peptide spans 1–28 (MEVKTFAFLQIAVCIAIGIELICAGTNA). 3 cysteine pairs are disulfide-bonded: cysteine 40-cysteine 59, cysteine 44-cysteine 61, and cysteine 55-cysteine 72. Residues asparagine 43, asparagine 49, asparagine 58, and asparagine 85 are each glycosylated (N-linked (GlcNAc...) asparagine).

Its subcellular location is the secreted. In terms of biological role, salivary chemokine-binding protein which binds to host chemokines CXCL1, CXCL2, CXCL3, CXCL5 and CXCL8. The polypeptide is Evasin P1162 (Ixodes ricinus (Common tick)).